The primary structure comprises 147 residues: Large ribosomal subunit protein bL9 (147 aa).

Belongs to the bacterial ribosomal protein bL9 family.

Functionally, binds to the 23S rRNA. The protein is Large ribosomal subunit protein bL9 of Clostridium tetani (strain Massachusetts / E88).